The chain runs to 715 residues: Fatty acid oxidation complex subunit alpha (715 aa).

The enoyl-CoA hydratase stretch occupies residues Met1–Pro190. The 3-hydroxyacyl-CoA dehydrogenase stretch occupies residues Gly306–Asn715.

In the N-terminal section; belongs to the enoyl-CoA hydratase/isomerase family. This sequence in the central section; belongs to the 3-hydroxyacyl-CoA dehydrogenase family. Heterotetramer of two alpha chains (FadJ) and two beta chains (FadI).

Its subcellular location is the cytoplasm. The catalysed reaction is a (3S)-3-hydroxyacyl-CoA = a (2E)-enoyl-CoA + H2O. It carries out the reaction a 4-saturated-(3S)-3-hydroxyacyl-CoA = a (3E)-enoyl-CoA + H2O. It catalyses the reaction a (3S)-3-hydroxyacyl-CoA + NAD(+) = a 3-oxoacyl-CoA + NADH + H(+). The enzyme catalyses (3S)-3-hydroxybutanoyl-CoA = (3R)-3-hydroxybutanoyl-CoA. The protein operates within lipid metabolism; fatty acid beta-oxidation. Catalyzes the formation of a hydroxyacyl-CoA by addition of water on enoyl-CoA. Also exhibits 3-hydroxyacyl-CoA epimerase and 3-hydroxyacyl-CoA dehydrogenase activities. This chain is Fatty acid oxidation complex subunit alpha, found in Salmonella dublin (strain CT_02021853).